The primary structure comprises 133 residues: UPF0225 protein BB3385 (133 aa).

This sequence belongs to the UPF0225 family.

This Bordetella bronchiseptica (strain ATCC BAA-588 / NCTC 13252 / RB50) (Alcaligenes bronchisepticus) protein is UPF0225 protein BB3385.